The primary structure comprises 321 residues: Aspartate carbamoyltransferase catalytic subunit (321 aa).

Residues Arg70 and Thr71 each coordinate carbamoyl phosphate. Position 98 (Lys98) interacts with L-aspartate. The carbamoyl phosphate site is built by Arg120, His148, and Gln151. Residues Arg181 and Arg235 each coordinate L-aspartate. The carbamoyl phosphate site is built by Gly276 and Pro277.

This sequence belongs to the aspartate/ornithine carbamoyltransferase superfamily. ATCase family. As to quaternary structure, heterododecamer (2C3:3R2) of six catalytic PyrB chains organized as two trimers (C3), and six regulatory PyrI chains organized as three dimers (R2).

It catalyses the reaction carbamoyl phosphate + L-aspartate = N-carbamoyl-L-aspartate + phosphate + H(+). It functions in the pathway pyrimidine metabolism; UMP biosynthesis via de novo pathway; (S)-dihydroorotate from bicarbonate: step 2/3. In terms of biological role, catalyzes the condensation of carbamoyl phosphate and aspartate to form carbamoyl aspartate and inorganic phosphate, the committed step in the de novo pyrimidine nucleotide biosynthesis pathway. In Gluconacetobacter diazotrophicus (strain ATCC 49037 / DSM 5601 / CCUG 37298 / CIP 103539 / LMG 7603 / PAl5), this protein is Aspartate carbamoyltransferase catalytic subunit.